Here is an 89-residue protein sequence, read N- to C-terminus: YcgL domain-containing protein Asuc_1390 (89 aa).

The region spanning 1 to 85 (MLCAIYKSKK…KDDWLFTIEK (85 aa)) is the YcgL domain.

This is YcgL domain-containing protein Asuc_1390 from Actinobacillus succinogenes (strain ATCC 55618 / DSM 22257 / CCUG 43843 / 130Z).